We begin with the raw amino-acid sequence, 226 residues long: N-(5'-phosphoribosyl)anthranilate isomerase (226 aa).

This sequence belongs to the TrpF family.

The enzyme catalyses N-(5-phospho-beta-D-ribosyl)anthranilate = 1-(2-carboxyphenylamino)-1-deoxy-D-ribulose 5-phosphate. It functions in the pathway amino-acid biosynthesis; L-tryptophan biosynthesis; L-tryptophan from chorismate: step 3/5. This is N-(5'-phosphoribosyl)anthranilate isomerase (TRP1) from Saccharomyces kudriavzevii (strain ATCC MYA-4449 / AS 2.2408 / CBS 8840 / NBRC 1802 / NCYC 2889) (Yeast).